A 149-amino-acid polypeptide reads, in one-letter code: Basic phospholipase A2 homolog MitTx-beta (149 aa).

Positions methionine 1–leucine 30 are cleaved as a signal peptide. 7 cysteine pairs are disulfide-bonded: cysteine 41-cysteine 100, cysteine 55-cysteine 148, cysteine 57-cysteine 73, cysteine 72-cysteine 130, cysteine 79-cysteine 123, cysteine 89-cysteine 116, and cysteine 109-cysteine 121.

Belongs to the phospholipase A2 family. Group I subfamily. K49 sub-subfamily. In terms of assembly, heterodimer of an alpha (Kunitz-type) and a beta (phospholipase A2 homolog) chains; non-covalently-linked. Expressed by the venom gland.

The protein localises to the secreted. In terms of biological role, heterodimer: MitTx, a heteromeric complex between Kunitz- and phospholipase-A2-like proteins, potently, persistently and selectively activates rat and chicken acid-sensing ion channel ASIC1. Both alternatively spliced rat isoforms ASIC1a and ASIC1b are activated, with a higher potency for ASIC1a (EC(50)=9.4 nM) vs ASIC1b (EC(50)=23 nM). The rat ASIC3 subtype is also sensitive to the heterodimer, but with a lower potency (EC(50)=830 nM). On rat ASIC2a, the toxin shows a very weak activation, but produces a remarkable potentiation (&gt;100-fold) of protons when the extracellular pH drops below neutrality. Moderate and weak activations are also observed on the heterotrimers Asic1a-Asic2a and Asic1a-Asic3 (expressed in CHO cells), respectively. The binding sites of the beta subunit of MitTx and the spider psalmotoxin-1 toxin overlap, explaining why these toxins are mutually exclusive. In vivo, the heterodimer elicits robust pain-related behavior in mice by activation of ASIC1 channels on capsaicin-sensitive nerve fibers. Monomer: does not have phospholipase A2 activity but may maintain some lipid-binding character from its PLA2 lineage, which could aid in effecting neuronal depolarization. The chain is Basic phospholipase A2 homolog MitTx-beta from Micrurus tener tener (Texas coral snake).